Consider the following 594-residue polypeptide: Glutamate decarboxylase 1 (594 aa).

Low complexity predominate over residues methionine 1 to serine 13. Residues methionine 1–asparagine 23 form a disordered region. Serine 78 carries the phosphoserine modification. Residue glutamine 190–serine 192 coordinates 4-aminobutanoate. Lysine 405 is subject to N6-(pyridoxal phosphate)lysine. Arginine 567 lines the 4-aminobutanoate pocket.

This sequence belongs to the group II decarboxylase family. In terms of assembly, homodimer. Requires pyridoxal 5'-phosphate as cofactor.

It carries out the reaction L-glutamate + H(+) = 4-aminobutanoate + CO2. Functionally, catalyzes the synthesis of the inhibitory neurotransmitter gamma-aminobutyric acid (GABA) with pyridoxal 5'-phosphate as cofactor. The chain is Glutamate decarboxylase 1 (GAD1) from Bos taurus (Bovine).